Consider the following 253-residue polypeptide: 5-oxoprolinase subunit A (253 aa).

The protein belongs to the LamB/PxpA family. As to quaternary structure, forms a complex composed of PxpA, PxpB and PxpC.

It carries out the reaction 5-oxo-L-proline + ATP + 2 H2O = L-glutamate + ADP + phosphate + H(+). Its function is as follows. Catalyzes the cleavage of 5-oxoproline to form L-glutamate coupled to the hydrolysis of ATP to ADP and inorganic phosphate. The sequence is that of 5-oxoprolinase subunit A from Bacillus cereus (strain ATCC 10987 / NRS 248).